Consider the following 211-residue polypeptide: ATP-dependent Clp protease proteolytic subunit (211 aa).

Ser106 acts as the Nucleophile in catalysis. Residue His131 is part of the active site.

Belongs to the peptidase S14 family. In terms of assembly, fourteen ClpP subunits assemble into 2 heptameric rings which stack back to back to give a disk-like structure with a central cavity, resembling the structure of eukaryotic proteasomes.

Its subcellular location is the cytoplasm. It catalyses the reaction Hydrolysis of proteins to small peptides in the presence of ATP and magnesium. alpha-casein is the usual test substrate. In the absence of ATP, only oligopeptides shorter than five residues are hydrolyzed (such as succinyl-Leu-Tyr-|-NHMec, and Leu-Tyr-Leu-|-Tyr-Trp, in which cleavage of the -Tyr-|-Leu- and -Tyr-|-Trp bonds also occurs).. Functionally, cleaves peptides in various proteins in a process that requires ATP hydrolysis. Has a chymotrypsin-like activity. Plays a major role in the degradation of misfolded proteins. This chain is ATP-dependent Clp protease proteolytic subunit, found in Maricaulis maris (strain MCS10) (Caulobacter maris).